A 627-amino-acid chain; its full sequence is 1-deoxy-D-xylulose-5-phosphate synthase (627 aa).

Residues His80 and 121–123 (GHS) contribute to the thiamine diphosphate site. Mg(2+) is bound at residue Asp152. Thiamine diphosphate is bound by residues 153-154 (GA), Asn181, Tyr288, and Glu370. Asn181 lines the Mg(2+) pocket.

This sequence belongs to the transketolase family. DXPS subfamily. Homodimer. Mg(2+) serves as cofactor. It depends on thiamine diphosphate as a cofactor.

It carries out the reaction D-glyceraldehyde 3-phosphate + pyruvate + H(+) = 1-deoxy-D-xylulose 5-phosphate + CO2. It participates in metabolic intermediate biosynthesis; 1-deoxy-D-xylulose 5-phosphate biosynthesis; 1-deoxy-D-xylulose 5-phosphate from D-glyceraldehyde 3-phosphate and pyruvate: step 1/1. In terms of biological role, catalyzes the acyloin condensation reaction between C atoms 2 and 3 of pyruvate and glyceraldehyde 3-phosphate to yield 1-deoxy-D-xylulose-5-phosphate (DXP). This chain is 1-deoxy-D-xylulose-5-phosphate synthase, found in Vibrio atlanticus (strain LGP32) (Vibrio splendidus (strain Mel32)).